The primary structure comprises 462 residues: Zinc transporter zipt-7.2 (462 aa).

The chain crosses the membrane as a helical span at residues 2–22; it reads LVKSCIFLSFLAIAAYGQAHL. The disordered stretch occupies residues 39–134; it reads HHQGHGHAHG…HGHSHGAESA (96 aa). Over residues 40 to 51 the composition is skewed to basic residues; it reads HQGHGHAHGGHG. The span at 65–74 shows a compositional bias: low complexity; the sequence is AAAAEAATAA. The segment covering 75-94 has biased composition (basic and acidic residues); that stretch reads AHDHGHAHDHDHGHAHDHGH. Residues 111–120 are compositionally biased toward basic residues; it reads HGHAHDHHGH. Positions 121–132 are enriched in basic and acidic residues; the sequence is SHEDHGHSHGAE. Residues 161–181 form a helical membrane-spanning segment; that stretch reads AISATLLISAAPCFILMFIPI. N-linked (GlcNAc...) asparagine glycosylation is present at N184. Residues 194 to 214 traverse the membrane as a helical segment; sequence VLLAFGSGGLLGDAFLHLIPH. Positions 219-239 are disordered; that stretch reads GDGHGHSHSHGHSHGGGGHSH. Residues 244–264 traverse the membrane as a helical segment; sequence MSVGGWVLGGIIAFLTVEKLV. Residues 270-307 form a disordered region; sequence EDGHGHSHGHSHGGEKKETKEKDSKDKVAKKEEKPEKD. Basic and acidic residues predominate over residues 281 to 307; that stretch reads HGGEKKETKEKDSKDKVAKKEEKPEKD. An N-linked (GlcNAc...) asparagine glycan is attached at N326. Helical transmembrane passes span 333–353, 376–396, and 410–430; these read IGAS…TVLV, AMLI…ISLF, and SWVL…SVIP. N435 carries N-linked (GlcNAc...) asparagine glycosylation. The chain crosses the membrane as a helical span at residues 441 to 461; that stretch reads TVKEIFAILTGIFLMYLIAIY.

It belongs to the ZIP transporter (TC 2.A.5) family. KE4/Catsup subfamily. Expressed in somatic tissues.

It is found in the membrane. Functionally, zinc transporter. The protein is Zinc transporter zipt-7.2 of Caenorhabditis elegans.